A 146-amino-acid polypeptide reads, in one-letter code: Snaclec stejaggregin-B subunit beta-1 (146 aa).

The signal sequence occupies residues 1–23 (MGRFIFVSFGLLVVFLSLSGTGA). 3 disulfides stabilise this stretch: Cys25-Cys36, Cys53-Cys142, and Cys119-Cys134. The region spanning 32 to 143 (YDLYCYRVFQ…CSQTYPFVCK (112 aa)) is the C-type lectin domain.

It belongs to the snaclec family. Heteromultimer; disulfide-linked. As to expression, expressed by the venom gland.

The protein localises to the secreted. In terms of biological role, interferes with one step of hemostasis (modulation of platelet aggregation, or coagulation cascade, for example). This chain is Snaclec stejaggregin-B subunit beta-1, found in Trimeresurus stejnegeri (Chinese green tree viper).